A 363-amino-acid chain; its full sequence is Osmoprotective compounds uptake ATP-binding protein GgtA (363 aa).

One can recognise an ABC transporter domain in the interval 4 to 234 (VSFEQVTKQF…PANLFVAGFI (231 aa)). Residue 36–43 (GPSGCGKT) coordinates ATP.

Belongs to the ABC transporter superfamily. As to quaternary structure, the complex is composed of two ATP-binding proteins (GgtA), two transmembrane proteins (GgtC and GgtD) and a solute-binding protein (GgtB).

It localises to the cell membrane. Part of the ABC transporter complex GgtABCD involved in the uptake of the osmoprotective compounds glucosylglycerol (GG), sucrose and trehalose. Responsible for energy coupling to the transport system. The polypeptide is Osmoprotective compounds uptake ATP-binding protein GgtA (Synechocystis sp. (strain ATCC 27184 / PCC 6803 / Kazusa)).